A 61-amino-acid polypeptide reads, in one-letter code: Temporin-CDYa (61 aa).

The signal sequence occupies residues 1–22 (MFPLKKSLLLLFFLGTINFSFC). A propeptide spanning residues 23–44 (EEERNAEEERRDDPEERDVAME) is cleaved from the precursor. The residue at position 59 (Leu59) is a Leucine amide.

It belongs to the frog skin active peptide (FSAP) family. Temporin subfamily. As to expression, expressed by the skin glands.

Its subcellular location is the secreted. Functionally, antimicrobial peptide. This is Temporin-CDYa from Rana dybowskii (Dybovsky's frog).